The sequence spans 536 residues: Light-independent protochlorophyllide reductase subunit B (536 aa).

Aspartate 36 contacts [4Fe-4S] cluster. The Proton donor role is filled by aspartate 292. Position 427–428 (427–428 (GL)) interacts with substrate. The segment covering 448 to 469 (SHLGHLGGHQSQTEQQQSQAAT) has biased composition (low complexity). A disordered region spans residues 448–489 (SHLGHLGGHQSQTEQQQSQAATNPSTQSNADSSSEESPLWTP). The span at 470–483 (NPSTQSNADSSSEE) shows a compositional bias: polar residues.

Belongs to the ChlB/BchB/BchZ family. In terms of assembly, protochlorophyllide reductase is composed of three subunits; ChlL, ChlN and ChlB. Forms a heterotetramer of two ChlB and two ChlN subunits. Requires [4Fe-4S] cluster as cofactor.

It catalyses the reaction chlorophyllide a + oxidized 2[4Fe-4S]-[ferredoxin] + 2 ADP + 2 phosphate = protochlorophyllide a + reduced 2[4Fe-4S]-[ferredoxin] + 2 ATP + 2 H2O. It functions in the pathway porphyrin-containing compound metabolism; chlorophyll biosynthesis (light-independent). In terms of biological role, component of the dark-operative protochlorophyllide reductase (DPOR) that uses Mg-ATP and reduced ferredoxin to reduce ring D of protochlorophyllide (Pchlide) to form chlorophyllide a (Chlide). This reaction is light-independent. The NB-protein (ChlN-ChlB) is the catalytic component of the complex. The chain is Light-independent protochlorophyllide reductase subunit B from Prochlorococcus marinus (strain MIT 9313).